The following is a 134-amino-acid chain: Small ribosomal subunit protein uS11 (134 aa).

The tract at residues 1 to 22 (MAQKTRATAARKPRRKVNKNVT) is disordered. Residues 9–18 (AARKPRRKVN) are compositionally biased toward basic residues.

Belongs to the universal ribosomal protein uS11 family. In terms of assembly, part of the 30S ribosomal subunit. Interacts with proteins S7 and S18. Binds to IF-3.

Its function is as follows. Located on the platform of the 30S subunit, it bridges several disparate RNA helices of the 16S rRNA. Forms part of the Shine-Dalgarno cleft in the 70S ribosome. In Kocuria rhizophila (strain ATCC 9341 / DSM 348 / NBRC 103217 / DC2201), this protein is Small ribosomal subunit protein uS11.